We begin with the raw amino-acid sequence, 478 residues long: ATP synthase subunit beta (478 aa).

Residue 163 to 170 (GGAGVGKT) participates in ATP binding.

Belongs to the ATPase alpha/beta chains family. F-type ATPases have 2 components, CF(1) - the catalytic core - and CF(0) - the membrane proton channel. CF(1) has five subunits: alpha(3), beta(3), gamma(1), delta(1), epsilon(1). CF(0) has three main subunits: a(1), b(2) and c(9-12). The alpha and beta chains form an alternating ring which encloses part of the gamma chain. CF(1) is attached to CF(0) by a central stalk formed by the gamma and epsilon chains, while a peripheral stalk is formed by the delta and b chains.

The protein localises to the cell inner membrane. It carries out the reaction ATP + H2O + 4 H(+)(in) = ADP + phosphate + 5 H(+)(out). Produces ATP from ADP in the presence of a proton gradient across the membrane. The catalytic sites are hosted primarily by the beta subunits. The protein is ATP synthase subunit beta of Aquifex pyrophilus.